Here is a 190-residue protein sequence, read N- to C-terminus: Segregation and condensation protein B (190 aa).

The protein belongs to the ScpB family. In terms of assembly, homodimer. Homodimerization may be required to stabilize the binding of ScpA to the Smc head domains. Component of a cohesin-like complex composed of ScpA, ScpB and the Smc homodimer, in which ScpA and ScpB bind to the head domain of Smc. The presence of the three proteins is required for the association of the complex with DNA.

The protein localises to the cytoplasm. Participates in chromosomal partition during cell division. May act via the formation of a condensin-like complex containing Smc and ScpA that pull DNA away from mid-cell into both cell halves. This is Segregation and condensation protein B from Bacillus cereus (strain AH187).